Consider the following 338-residue polypeptide: HTH-type transcriptional regulator SyrM 1 (338 aa).

The HTH lysR-type domain maps to 35 to 92; the sequence is LDLNTLLALEALLEHRNVTQAARHLGLSQPSVSRALIRLRGVFNDDLLVRGSSGMVPT. Positions 52 to 72 form a DNA-binding region, H-T-H motif; the sequence is VTQAARHLGLSQPSVSRALIR.

It belongs to the LysR transcriptional regulatory family.

Its function is as follows. Transcriptional activator that regulates the expression of genes involved in symbiosis. Among other targets it acts on the nolWBTUV operon. In Sinorhizobium fredii (strain NBRC 101917 / NGR234), this protein is HTH-type transcriptional regulator SyrM 1 (syrM1).